A 458-amino-acid chain; its full sequence is Secretion-regulating guanine nucleotide exchange factor (458 aa).

RCC1 repeat units follow at residues 15–67 (AALF…VTDG), 68–119 (GDLF…LTEN), 120–171 (GQVL…ATAS), 172–230 (GIVF…LTDA), 231–283 (GEVY…QTET), 284–351 (GKMF…IIGG), and 352–402 (VCYS…LCQL). The interval 420–458 (DAIEDTESQKAMDKERNWKERQSETSTQSQSDWSRNGGL) is disordered. Basic and acidic residues predominate over residues 426–442 (ESQKAMDKERNWKERQS). Serine 427 is subject to Phosphoserine.

In terms of assembly, interacts with SEC5. The interaction occurs only in the presence of magnesium or manganese and is stimulated by dCTP or GTP.

The protein localises to the cytoplasm. The protein resides in the nucleus. Probable guanine nucleotide exchange factor (GEF), which may be involved in the secretion process. In Homo sapiens (Human), this protein is Secretion-regulating guanine nucleotide exchange factor (SERGEF).